Reading from the N-terminus, the 189-residue chain is Chitin synthase 1 (189 aa).

The protein belongs to the chitin synthase family.

Its subcellular location is the cell membrane. It catalyses the reaction [(1-&gt;4)-N-acetyl-beta-D-glucosaminyl](n) + UDP-N-acetyl-alpha-D-glucosamine = [(1-&gt;4)-N-acetyl-beta-D-glucosaminyl](n+1) + UDP + H(+). Its function is as follows. Polymerizes chitin, a structural polymer of the cell wall and septum, by transferring the sugar moiety of UDP-GlcNAc to the non-reducing end of the growing chitin polymer. The protein is Chitin synthase 1 (CHS1) of Exophiala exophialae (Black yeast-like fungus).